We begin with the raw amino-acid sequence, 457 residues long: Argininosuccinate lyase (457 aa).

Belongs to the lyase 1 family. Argininosuccinate lyase subfamily.

It is found in the cytoplasm. It carries out the reaction 2-(N(omega)-L-arginino)succinate = fumarate + L-arginine. Its pathway is amino-acid biosynthesis; L-arginine biosynthesis; L-arginine from L-ornithine and carbamoyl phosphate: step 3/3. In Escherichia coli O157:H7, this protein is Argininosuccinate lyase.